Reading from the N-terminus, the 115-residue chain is Large ribosomal subunit protein bL20c (115 aa).

This sequence belongs to the bacterial ribosomal protein bL20 family.

It localises to the plastid. The protein localises to the chloroplast. Its function is as follows. Binds directly to 23S ribosomal RNA and is necessary for the in vitro assembly process of the 50S ribosomal subunit. It is not involved in the protein synthesizing functions of that subunit. This chain is Large ribosomal subunit protein bL20c, found in Pleurastrum terricola (Filamentous green alga).